The following is a 429-amino-acid chain: Threonine synthase (429 aa).

Lys-108 bears the N6-(pyridoxal phosphate)lysine mark.

Belongs to the threonine synthase family. The cofactor is pyridoxal 5'-phosphate.

It carries out the reaction O-phospho-L-homoserine + H2O = L-threonine + phosphate. It functions in the pathway amino-acid biosynthesis; L-threonine biosynthesis; L-threonine from L-aspartate: step 5/5. In terms of biological role, catalyzes the gamma-elimination of phosphate from L-phosphohomoserine and the beta-addition of water to produce L-threonine. In Buchnera aphidicola subsp. Acyrthosiphon pisum (strain APS) (Acyrthosiphon pisum symbiotic bacterium), this protein is Threonine synthase (thrC).